The following is a 340-amino-acid chain: Protein-lysine N-methyltransferase EEF2KMT (340 aa).

The residue at position 1 (Met1) is an N-acetylmethionine. Residues Trp139, 165–167, Trp238, and Ala257 contribute to the S-adenosyl-L-methionine site; that span reads GSG.

The protein belongs to the class I-like SAM-binding methyltransferase superfamily. EEF2KMT family. Interacts with FAM86B2 and FAM86C1P.

It localises to the cytoplasm. The catalysed reaction is L-lysyl-[protein] + 3 S-adenosyl-L-methionine = N(6),N(6),N(6)-trimethyl-L-lysyl-[protein] + 3 S-adenosyl-L-homocysteine + 3 H(+). Catalyzes the trimethylation of eukaryotic elongation factor 2 (EEF2) on 'Lys-525'. The protein is Protein-lysine N-methyltransferase EEF2KMT (EEF2KMT) of Bos taurus (Bovine).